The chain runs to 770 residues: MRSRTGCLTCRQRKLKCDEKKPVCRQCAKASRECIPSPGIVFRHQQNASMNGEDSTAEKSLKGFYAYKNTFDKDAMWVDIPKCITFVTTTNLYLDSGVLELDTMLATSMESPKPFEPHCLASWRTQGDRHPIGNVPSSLRSELAPSSVSCCLTQDVKALSPQIHSSPGSVIERPVSPPMSLFNPHIGLIMNLTTSSAMPSTDSFFSLPFDSTDYMPRPVSRPRLRWRPPRPNASILTQDEHEIACLLQWFSEGPGYWMDLFITGTYFASHVPVEAVENPLLKYAIAACAAKAFARVQDQKPAMGGSSTRQAGMKHYPNVPLVDWEHKTAVYYNTTVSMLLQALNGKVASSPNGSKCELRQRNGDPACAYNVSAPKPRRISQNTSFVPSTEELLVVIAILCFYEFLDTSISEWEKHLHGAKSFLVLSQQHIRSLRLPNLASPMFPTSSKFASKAWRAVFWNIARQDMLAAFINKTSTRLDTDDLTLWREAGLILDEQACIMPSNAAVYGYLEEGDAMIKEELICNTLVWLMVKLVNFMAVGSVIPSRSGAAWDGVVHRTRFCQWFSLRKQFQVWHEGLPVTFRPSARVAPSHTSGQVSNDDSASMFSEAWHSMPMCASTMQTYYMSQILLFMNKPHESTLECHTELIRMSYHQSVLAACQIHSRRIIGISLAQPDKAVRVHSVQPLFTAGQCLSDNRECQIVLRLLRDIESDTGWATDYRVQQLVEQWQRNEPDSQALWSDSRCAIPHENKYPSPTFNTVRLQHGSDLRSN.

Positions 7–34 (CLTCRQRKLKCDEKKPVCRQCAKASREC) form a DNA-binding region, zn(2)-C6 fungal-type.

The protein resides in the nucleus. Functionally, transcription factor that regulates the expression of the gene clusters that mediate the biosynthesis of AM-toxins, host-selective toxins (HSTs) causing Alternaria blotch on apple, a worldwide distributed disease. AM-toxins have two target sites for affecting susceptible apple cells; they cause invagination of the plasma membrane and electrolyte loss and chloroplast disorganization. The sequence is that of Transcription activator AMTR1 from Alternaria alternata (Alternaria rot fungus).